The sequence spans 124 residues: UPF0102 protein BL0935 (124 aa).

It belongs to the UPF0102 family.

The protein is UPF0102 protein BL0935 of Bifidobacterium longum (strain NCC 2705).